The sequence spans 858 residues: Polyhomeotic-like protein 2 (858 aa).

Disordered regions lie at residues 1 to 76, 230 to 307, 337 to 388, 407 to 444, 473 to 493, and 529 to 561; these read MENE…QYLQ, QQTP…MEGR, PQPS…VALQ, LQCP…PHTP, KEVA…SPHQ, and TDLS…KPPQ. Low complexity-rich tracts occupy residues 10–34 and 230–241; these read TSSS…NSSS and QQTPAAAASGPT. Residues 33–53 are interaction with BMI1; the sequence is SSGGSGRPTGPQISVYSGIPD. Residues 265 to 274 are compositionally biased toward polar residues; that stretch reads PAQSRNTAQA. Over residues 337-358 the composition is skewed to low complexity; it reads PQPSSKHLQPQFVIQQQPQPQQ. The segment covering 379 to 388 has biased composition (polar residues); sequence ASVSPSVALQ. Basic and acidic residues predominate over residues 473 to 483; sequence KEVAPGEKSVP. Over residues 537 to 551 the composition is skewed to low complexity; sequence TSGNGNSASSIAGTA. The HD1 motif lies at 558-587; sequence KPPQAIVKPQILTHVIEGFVIQEGAEPFPV. Glycyl lysine isopeptide (Lys-Gly) (interchain with G-Cter in SUMO2) cross-links involve residues Lys-598 and Lys-600. Thr-619 carries the phosphothreonine modification. At Ser-621 the chain carries Phosphoserine. Lys-632 participates in a covalent cross-link: Glycyl lysine isopeptide (Lys-Gly) (interchain with G-Cter in SUMO2). The FCS-type zinc finger occupies 633 to 667; it reads EEGAPLKLKCELCGRVDFAYKFKRSKRFCSMACAK. Zn(2+) is bound by residues Cys-642, Cys-645, Cys-661, and Cys-665. Disordered regions lie at residues 688–720 and 732–768; these read QKAG…TGTV and HSQE…GQRD. Lys-702 is covalently cross-linked (Glycyl lysine isopeptide (Lys-Gly) (interchain with G-Cter in SUMO2)). At Ser-751 the chain carries Phosphoserine. Residues 794–858 enclose the SAM domain; that stretch reads WNVEDVYEFI…YARISMLKDS (65 aa). A Glycyl lysine isopeptide (Lys-Gly) (interchain with G-Cter in SUMO2) cross-link involves residue Lys-847.

In terms of assembly, component of a PRC1-like complex. Interacts with CBX4. Interacts with BMI1, PCGF2, PHC1 and RNF2. Interacts with CHTOP. Interacts with the N-terminal region of the SP1 transcription factor and with MAPKAPK2. Interacts with SAMD7 and SAMD11.

Its subcellular location is the nucleus. In terms of biological role, component of a Polycomb group (PcG) multiprotein PRC1-like complex, a complex class required to maintain the transcriptionally repressive state of many genes, including Hox genes, throughout development. PcG PRC1 complex acts via chromatin remodeling and modification of histones; it mediates monoubiquitination of histone H2A 'Lys-119', rendering chromatin heritably changed in its expressibility. The protein is Polyhomeotic-like protein 2 (PHC2) of Homo sapiens (Human).